A 222-amino-acid chain; its full sequence is Histone H1.5 (222 aa).

Residues 1–16 (MSETAPAETTAPAPVE) are compositionally biased toward low complexity. The tract at residues 1–55 (MSETAPAETTAPAPVEKSPAKKKTKKAGAAKRKATGPPVSELITKAVSASKERGG) is disordered. An N-acetylserine modification is found at S2. S2 is modified (phosphoserine). Residue K17 is modified to N6-acetyllysine. A Phosphoserine modification is found at S18. The segment covering 20–34 (AKKKTKKAGAAKRKA) has biased composition (basic residues). Residue K26 is modified to N6-methyllysine. K33 is subject to N6-(beta-hydroxybutyryl)lysine; alternate. K33 is subject to N6-succinyllysine; alternate. The residue at position 35 (T35) is a Phosphothreonine. The region spanning 35-108 (TGPPVSELIT…GASGSFKLNK (74 aa)) is the H15 domain. At K45 the chain carries N6-acetyllysine. K51 carries the N6-(beta-hydroxybutyryl)lysine modification. R53 is subject to Citrulline. K63 is subject to N6-(beta-hydroxybutyryl)lysine. K74 carries the post-translational modification N6-acetyllysine. An N6-(beta-hydroxybutyryl)lysine mark is found at K84, K89, and K105. The interval 94 to 222 (QTKGTGASGS…KVKKAVSKKK (129 aa)) is disordered. Over residues 118-129 (KAKKTGAAKAKK) the composition is skewed to basic residues. A phosphothreonine mark is found at T134 and T151. Over residues 136–157 (KKPKKTAGAKKTVKKTPKKAKK) the composition is skewed to basic residues. K164 bears the N6-acetyllysine mark. The segment covering 165 to 183 (KVTKSPKKAKAAAKPKKAT) has biased composition (basic residues). A phosphoserine mark is found at S169 and S185. Positions 190–222 (KAVKSKASKPKVTKPKAAKPKAAKVKKAVSKKK) are enriched in basic residues.

This sequence belongs to the histone H1/H5 family. As to quaternary structure, interacts with MSX1. Post-translationally, H1 histones are progressively phosphorylated during the cell cycle, becoming maximally phosphorylated during late G2 phase and M phase, and being dephosphorylated sharply thereafter. Citrullination at Arg-53 (H1R54ci) by PADI4 takes place within the DNA-binding site of H1 and results in its displacement from chromatin and global chromatin decondensation, thereby promoting pluripotency and stem cell maintenance.

The protein localises to the nucleus. It localises to the chromosome. Functionally, histone H1 protein binds to linker DNA between nucleosomes forming the macromolecular structure known as the chromatin fiber. Histones H1 are necessary for the condensation of nucleosome chains into higher-order structured fibers. Also acts as a regulator of individual gene transcription through chromatin remodeling, nucleosome spacing and DNA methylation. The sequence is that of Histone H1.5 (H1-5) from Rattus norvegicus (Rat).